Consider the following 372-residue polypeptide: UDP-N-acetylglucosamine 2-epimerase (372 aa).

Substrate-binding positions include arginine 10, lysine 15, aspartate 95, glutamate 117, histidine 212, glutamine 270, phenylalanine 275, 289–291 (SGG), glutamate 295, and arginine 312.

This sequence belongs to the UDP-N-acetylglucosamine 2-epimerase family.

The enzyme catalyses UDP-N-acetyl-alpha-D-glucosamine = UDP-N-acetyl-alpha-D-mannosamine. It participates in capsule biogenesis; capsule polysaccharide biosynthesis. Activated by UDP-GlcNAc and inhibited by 2-acetamidoglucal and UDP. Activity is strongly decreased in the presence of Co(2+) and abolished in the presence of Mn(2+) or Zn(2+). Its function is as follows. Catalyzes the interconversion between UDP-N-acetylglucosamine (UDP-GlcNAc) and UDP-N-acetylmannosamine (UDP-ManNAc). Involved in the biosynthesis of the capsular polysaccharides. In vitro, can also use several chemoenzymatically synthesized UDP-ManNAc derivatives as substrates, with lower efficiency. This is UDP-N-acetylglucosamine 2-epimerase from Neisseria meningitidis serogroup A / serotype 4A (strain DSM 15465 / Z2491).